The following is a 363-amino-acid chain: Copper-containing nitrite reductase (363 aa).

A signal peptide spans 1–24 (MSVFRSVLGACVLLGSCASSLALA). Plastocyanin-like domains are found at residues 25–193 (GGAE…YDRV) and 194–363 (YTIG…EPKQ). 7 residues coordinate Cu cation: His113, His118, His153, Cys154, His163, Met168, and His324.

The protein belongs to the multicopper oxidase family. In terms of assembly, homotrimer. The cofactor is Cu(2+). Requires Cu(+) as cofactor. FAD serves as cofactor.

It localises to the periplasm. The catalysed reaction is nitric oxide + Fe(III)-[cytochrome c] + H2O = Fe(II)-[cytochrome c] + nitrite + 2 H(+). It participates in nitrogen metabolism; nitrate reduction (denitrification); dinitrogen from nitrate: step 2/4. This is Copper-containing nitrite reductase (nirK) from Pseudomonas chlororaphis (Pseudomonas aureofaciens).